The sequence spans 345 residues: Anthranilate phosphoribosyltransferase (345 aa).

5-phospho-alpha-D-ribose 1-diphosphate contacts are provided by residues Gly80, 83–84, Thr88, 90–93, 108–116, and Ser120; these read GD, NIST, and KHGNRSVSS. Gly80 contacts anthranilate. Ser92 provides a ligand contact to Mg(2+). Residue Asn111 coordinates anthranilate. Arg166 provides a ligand contact to anthranilate. 2 residues coordinate Mg(2+): Asp225 and Glu226.

Belongs to the anthranilate phosphoribosyltransferase family. In terms of assembly, homodimer. It depends on Mg(2+) as a cofactor.

It catalyses the reaction N-(5-phospho-beta-D-ribosyl)anthranilate + diphosphate = 5-phospho-alpha-D-ribose 1-diphosphate + anthranilate. The protein operates within amino-acid biosynthesis; L-tryptophan biosynthesis; L-tryptophan from chorismate: step 2/5. In terms of biological role, catalyzes the transfer of the phosphoribosyl group of 5-phosphorylribose-1-pyrophosphate (PRPP) to anthranilate to yield N-(5'-phosphoribosyl)-anthranilate (PRA). The protein is Anthranilate phosphoribosyltransferase of Acetivibrio thermocellus (strain ATCC 27405 / DSM 1237 / JCM 9322 / NBRC 103400 / NCIMB 10682 / NRRL B-4536 / VPI 7372) (Clostridium thermocellum).